Here is a 217-residue protein sequence, read N- to C-terminus: UPF0323 lipoprotein HPP12_0232 (217 aa).

The N-terminal stretch at 1 to 27 (MKKPYRKISDYAIVGGLSALVMVSIVG) is a signal peptide. The N-palmitoyl cysteine moiety is linked to residue cysteine 28. Cysteine 28 is lipidated: S-diacylglycerol cysteine. Residues 160 to 171 (QRTYKSPQAYQR) show a composition bias toward polar residues. A disordered region spans residues 160-217 (QRTYKSPQAYQRSQNSFSKSAPSASSMGTASKGQSGFFGSSRPTSSPAISSGTRGFNS). A compositionally biased stretch (low complexity) spans 172–185 (SQNSFSKSAPSASS). A compositionally biased stretch (polar residues) spans 186-197 (MGTASKGQSGFF). A compositionally biased stretch (low complexity) spans 199–210 (SSRPTSSPAISS).

This sequence belongs to the UPF0323 family.

Its subcellular location is the cell membrane. The chain is UPF0323 lipoprotein HPP12_0232 from Helicobacter pylori (strain P12).